A 139-amino-acid polypeptide reads, in one-letter code: Large-conductance mechanosensitive channel (139 aa).

Helical transmembrane passes span valine 14–alanine 34, isoleucine 38–proline 58, and glycine 82–isoleucine 102.

This sequence belongs to the MscL family. Homopentamer.

Its subcellular location is the cell inner membrane. Functionally, channel that opens in response to stretch forces in the membrane lipid bilayer. May participate in the regulation of osmotic pressure changes within the cell. This chain is Large-conductance mechanosensitive channel, found in Methylobacterium radiotolerans (strain ATCC 27329 / DSM 1819 / JCM 2831 / NBRC 15690 / NCIMB 10815 / 0-1).